A 605-amino-acid polypeptide reads, in one-letter code: Aspartate--tRNA(Asp/Asn) ligase (605 aa).

An L-aspartate-binding site is contributed by glutamate 178. The aspartate stretch occupies residues 202-205; it reads QLFK. Arginine 224 is an L-aspartate binding site. ATP is bound by residues 224–226 and glutamine 233; that span reads RDE. Histidine 458 lines the L-aspartate pocket. Glutamate 488 serves as a coordination point for ATP. Arginine 495 lines the L-aspartate pocket. 540 to 543 lines the ATP pocket; sequence GLDR. Residues 580–605 form a disordered region; the sequence is QQLKELHVTPAKPAKTTAKTKPRPAD.

The protein belongs to the class-II aminoacyl-tRNA synthetase family. Type 1 subfamily. In terms of assembly, homodimer.

It is found in the cytoplasm. It catalyses the reaction tRNA(Asx) + L-aspartate + ATP = L-aspartyl-tRNA(Asx) + AMP + diphosphate. In terms of biological role, aspartyl-tRNA synthetase with relaxed tRNA specificity since it is able to aspartylate not only its cognate tRNA(Asp) but also tRNA(Asn). Reaction proceeds in two steps: L-aspartate is first activated by ATP to form Asp-AMP and then transferred to the acceptor end of tRNA(Asp/Asn). In Thermosynechococcus vestitus (strain NIES-2133 / IAM M-273 / BP-1), this protein is Aspartate--tRNA(Asp/Asn) ligase.